The primary structure comprises 308 residues: uncharacterized protein (308 aa).

Residues 43–55 (SQYGTWADQHQNG) show a composition bias toward polar residues. Residues 43-289 (SQYGTWADQH…KEERSEECSP (247 aa)) form a disordered region. Serine 62 bears the Phosphoserine mark. Polar residues predominate over residues 80–90 (HLSSYTESTSV). Positions 91-109 (EQRDSSRDRRSSSVDRSSS) are enriched in basic and acidic residues. Residues 136–152 (IHQTSVLDSSALKTRVQ) are compositionally biased toward polar residues. Residues 153-168 (LSKRSRRRAPISHSLR) are compositionally biased toward basic residues. Serine 166 carries the post-translational modification Phosphoserine. Basic and acidic residues-rich tracts occupy residues 175–186 (SESRSPLEEESH) and 193–216 (DSTE…ERTP). 4 positions are modified to phosphoserine: serine 205, serine 259, serine 262, and serine 288.

This is an uncharacterized protein from Mus musculus (Mouse).